Reading from the N-terminus, the 432-residue chain is Luc7-like protein 3 (432 aa).

At methionine 1 the chain carries N-acetylmethionine. Residues serine 3, serine 110, and serine 115 each carry the phosphoserine modification. Residues 124–181 (KNEEKIQVLTDKIDVLLQQIEELGSEGKVEEAQGMMKLVEQLKEERELLRSTTSTIES) adopt a coiled-coil conformation. Lysine 231 is subject to N6-acetyllysine. Residues 234–287 (LRKRTEEPDRDERLKKEKQEREEREKEREREREERERKRRREEEEREKERARDR) are compositionally biased toward basic and acidic residues. Residues 234–432 (LRKRTEEPDR…IKSEGDTQSN (199 aa)) form a disordered region. The segment covering 288–301 (ERRKRSRSRSRHSS) has biased composition (basic residues). A compositionally biased stretch (basic and acidic residues) spans 302 to 311 (RTSDRRCSRS). The segment covering 312 to 367 (RDHKRSRSRDRRRSRSRDRRRSRSHDRSERKHRSRSRDRRRSKSRDRKSYKHRSKS) has biased composition (basic residues). The span at 368–414 (RDREQDRKSKEKEKKGSDDKKSSVKSSSREKQSEDTNPESKESDTKN) shows a compositional bias: basic and acidic residues. Position 420 is a phosphoserine (serine 420). The span at 421-432 (EDIKSEGDTQSN) shows a compositional bias: basic and acidic residues. Lysine 424 participates in a covalent cross-link: Glycyl lysine isopeptide (Lys-Gly) (interchain with G-Cter in SUMO1); alternate. Residue lysine 424 forms a Glycyl lysine isopeptide (Lys-Gly) (interchain with G-Cter in SUMO2); alternate linkage. Phosphoserine occurs at positions 425 and 431.

Belongs to the Luc7 family. In terms of assembly, may interact with SFRS1 and form homodimers. Interacts with JMJD6. Interacts with RBM25. Interacts with RSRC1 (via Arg/Ser-rich domain). Interacts with RRP1B.

It is found in the nucleus speckle. Its function is as follows. Binds cAMP regulatory element DNA sequence. May play a role in RNA splicing. The polypeptide is Luc7-like protein 3 (Luc7l3) (Mus musculus (Mouse)).